We begin with the raw amino-acid sequence, 295 residues long: Shikimate dehydrogenase (NADP(+)) (295 aa).

Shikimate contacts are provided by residues 24–26 (SRS) and threonine 71. Lysine 75 acts as the Proton acceptor in catalysis. Glutamate 87 is a binding site for NADP(+). Shikimate-binding residues include asparagine 96 and aspartate 111. Residues 136 to 140 (GAGGA), 160 to 165 (NRTASR), and methionine 233 contribute to the NADP(+) site. Tyrosine 235 is a shikimate binding site. NADP(+) is bound at residue glycine 256.

Belongs to the shikimate dehydrogenase family. As to quaternary structure, homodimer.

The enzyme catalyses shikimate + NADP(+) = 3-dehydroshikimate + NADPH + H(+). Its pathway is metabolic intermediate biosynthesis; chorismate biosynthesis; chorismate from D-erythrose 4-phosphate and phosphoenolpyruvate: step 4/7. In terms of biological role, involved in the biosynthesis of the chorismate, which leads to the biosynthesis of aromatic amino acids. Catalyzes the reversible NADPH linked reduction of 3-dehydroshikimate (DHSA) to yield shikimate (SA). The chain is Shikimate dehydrogenase (NADP(+)) from Cupriavidus necator (strain ATCC 17699 / DSM 428 / KCTC 22496 / NCIMB 10442 / H16 / Stanier 337) (Ralstonia eutropha).